A 207-amino-acid polypeptide reads, in one-letter code: Ribosomal RNA small subunit methyltransferase G (207 aa).

Residues Gly-76, Gln-81, 127–128 (VE), and Arg-141 contribute to the S-adenosyl-L-methionine site.

The protein belongs to the methyltransferase superfamily. RNA methyltransferase RsmG family.

It is found in the cytoplasm. The enzyme catalyses guanosine(527) in 16S rRNA + S-adenosyl-L-methionine = N(7)-methylguanosine(527) in 16S rRNA + S-adenosyl-L-homocysteine. Functionally, specifically methylates the N7 position of guanine in position 527 of 16S rRNA. The polypeptide is Ribosomal RNA small subunit methyltransferase G (Neisseria meningitidis serogroup C (strain 053442)).